The following is a 154-amino-acid chain: Basic phospholipase A2 PC20 (154 aa).

Residues 1–21 (MYPAHLLVLLAVCVSLLGASA) form the signal peptide. A propeptide spanning residues 22 to 27 (ISPRPL) is cleaved from the precursor. Disulfide bonds link Cys-38/Cys-98, Cys-54/Cys-143, Cys-56/Cys-72, Cys-71/Cys-125, Cys-78/Cys-118, Cys-87/Cys-111, and Cys-105/Cys-116. Tyr-55, Ser-57, and Gly-59 together coordinate Ca(2+). Residue His-75 is part of the active site. A Ca(2+)-binding site is contributed by Asp-76. Asp-119 is a catalytic residue.

It belongs to the phospholipase A2 family. Group I subfamily. D49 sub-subfamily. Ca(2+) is required as a cofactor. In terms of tissue distribution, expressed by the venom gland.

The protein resides in the secreted. The catalysed reaction is a 1,2-diacyl-sn-glycero-3-phosphocholine + H2O = a 1-acyl-sn-glycero-3-phosphocholine + a fatty acid + H(+). Snake venom phospholipase A2 (PLA2) that inhibits neuromuscular transmission by blocking acetylcholine release from the nerve termini. PLA2 catalyzes the calcium-dependent hydrolysis of the 2-acyl groups in 3-sn-phosphoglycerides. In Laticauda colubrina (Yellow-lipped sea krait), this protein is Basic phospholipase A2 PC20.